The following is a 1153-amino-acid chain: uncharacterized protein (1153 aa).

The N-terminal stretch at 1 to 18 (MNKNIFITLLISLLLLSG) is a signal peptide. Residue Cys-19 is the site of N-palmitoyl cysteine attachment. Residue Cys-19 is the site of S-diacylglycerol cysteine attachment. 4 consecutive transmembrane segments (helical) span residues 289-309 (VSAI…IGNI), 393-413 (LGFI…FLIF), 422-442 (ALIT…FMLF), and 457-477 (ISYA…SMII).

The protein belongs to the TrbL/VirB6 family.

It localises to the cell membrane. This is an uncharacterized protein from Rickettsia conorii (strain ATCC VR-613 / Malish 7).